Consider the following 804-residue polypeptide: Ribonucleoside-diphosphate reductase large subunit-like protein (804 aa).

It belongs to the ribonucleoside diphosphate reductase large chain family. In terms of assembly, the genome of human herpesvirus-6 does not code for a ribonucleotide reductase small subunit.

It localises to the virion. The protein localises to the host cytoplasm. In terms of biological role, does not possess a ribonucleotide reductase activity. Betaherpesviruses probably use another strategy to expand the dNTP pool in a quiescent host cell. This Human herpesvirus 6B (strain Z29) (HHV-6 variant B) protein is Ribonucleoside-diphosphate reductase large subunit-like protein.